We begin with the raw amino-acid sequence, 211 residues long: Large ribosomal subunit protein bL25 (211 aa).

Positions 185-211 are disordered; sequence ESTTPAATEGEETEAAAAAPEPAAEDK. Residues 199–211 show a composition bias toward low complexity; that stretch reads AAAAAPEPAAEDK.

It belongs to the bacterial ribosomal protein bL25 family. CTC subfamily. As to quaternary structure, part of the 50S ribosomal subunit; part of the 5S rRNA/L5/L18/L25 subcomplex. Contacts the 5S rRNA. Binds to the 5S rRNA independently of L5 and L18.

Functionally, this is one of the proteins that binds to the 5S RNA in the ribosome where it forms part of the central protuberance. In Treponema denticola (strain ATCC 35405 / DSM 14222 / CIP 103919 / JCM 8153 / KCTC 15104), this protein is Large ribosomal subunit protein bL25.